The chain runs to 449 residues: Signal recognition particle protein (449 aa).

Residues 109–116 (GLQGGGKT), 191–195 (DTAGR), and 249–252 (SRID) each bind GTP.

This sequence belongs to the GTP-binding SRP family. SRP54 subfamily. Part of the signal recognition particle protein translocation system, which is composed of SRP and FtsY. SRP is a ribonucleoprotein composed of Ffh and a 4.5S RNA molecule.

It is found in the cytoplasm. The catalysed reaction is GTP + H2O = GDP + phosphate + H(+). Involved in targeting and insertion of nascent membrane proteins into the cytoplasmic membrane. Binds to the hydrophobic signal sequence of the ribosome-nascent chain (RNC) as it emerges from the ribosomes. The SRP-RNC complex is then targeted to the cytoplasmic membrane where it interacts with the SRP receptor FtsY. Interaction with FtsY leads to the transfer of the RNC complex to the Sec translocase for insertion into the membrane, the hydrolysis of GTP by both Ffh and FtsY, and the dissociation of the SRP-FtsY complex into the individual components. The protein is Signal recognition particle protein of Rickettsia typhi (strain ATCC VR-144 / Wilmington).